Reading from the N-terminus, the 1317-residue chain is Toxin protein Tse5 (1317 aa).

The interval 395–419 is disordered; the sequence is GRETRRRRDGQGRMLEEESPGKARY. The segment covering 403-415 has biased composition (basic and acidic residues); that stretch reads DGQGRMLEEESPG.

Functionally, toxin secreted by the H1 type VI (H1-T6SS) secretion system that acts on bacterial target cells. The producing bacterium is protected by a cognate immunity protein. This Pseudomonas aeruginosa (strain ATCC 15692 / DSM 22644 / CIP 104116 / JCM 14847 / LMG 12228 / 1C / PRS 101 / PAO1) protein is Toxin protein Tse5.